A 940-amino-acid chain; its full sequence is Alanine--tRNA ligase (940 aa).

Zn(2+) contacts are provided by histidine 581, histidine 585, cysteine 683, and histidine 687.

It belongs to the class-II aminoacyl-tRNA synthetase family. Requires Zn(2+) as cofactor.

It localises to the cytoplasm. The enzyme catalyses tRNA(Ala) + L-alanine + ATP = L-alanyl-tRNA(Ala) + AMP + diphosphate. Functionally, catalyzes the attachment of alanine to tRNA(Ala) in a two-step reaction: alanine is first activated by ATP to form Ala-AMP and then transferred to the acceptor end of tRNA(Ala). Also edits incorrectly charged Ser-tRNA(Ala) and Gly-tRNA(Ala) via its editing domain. This is Alanine--tRNA ligase from Leptospira borgpetersenii serovar Hardjo-bovis (strain L550).